The primary structure comprises 279 residues: 3-methyl-2-oxobutanoate hydroxymethyltransferase (279 aa).

Mg(2+) contacts are provided by Asp43 and Asp82. 3-methyl-2-oxobutanoate contacts are provided by residues 43-44 (DS), Asp82, and Lys112. Position 114 (Glu114) interacts with Mg(2+). Glu181 functions as the Proton acceptor in the catalytic mechanism.

This sequence belongs to the PanB family. In terms of assembly, homodecamer; pentamer of dimers. Mg(2+) serves as cofactor.

The protein localises to the cytoplasm. It catalyses the reaction 3-methyl-2-oxobutanoate + (6R)-5,10-methylene-5,6,7,8-tetrahydrofolate + H2O = 2-dehydropantoate + (6S)-5,6,7,8-tetrahydrofolate. The protein operates within cofactor biosynthesis; (R)-pantothenate biosynthesis; (R)-pantoate from 3-methyl-2-oxobutanoate: step 1/2. Functionally, catalyzes the reversible reaction in which hydroxymethyl group from 5,10-methylenetetrahydrofolate is transferred onto alpha-ketoisovalerate to form ketopantoate. The polypeptide is 3-methyl-2-oxobutanoate hydroxymethyltransferase (Exiguobacterium sibiricum (strain DSM 17290 / CCUG 55495 / CIP 109462 / JCM 13490 / 255-15)).